Reading from the N-terminus, the 565-residue chain is Sulfite reductase [NADPH] hemoprotein beta-component (565 aa).

The [4Fe-4S] cluster site is built by Cys429, Cys435, Cys474, and Cys478. Cys478 lines the siroheme pocket.

It belongs to the nitrite and sulfite reductase 4Fe-4S domain family. Alpha(8)-beta(8). The alpha component is a flavoprotein, the beta component is a hemoprotein. Siroheme is required as a cofactor. [4Fe-4S] cluster serves as cofactor.

It catalyses the reaction hydrogen sulfide + 3 NADP(+) + 3 H2O = sulfite + 3 NADPH + 4 H(+). It functions in the pathway sulfur metabolism; hydrogen sulfide biosynthesis; hydrogen sulfide from sulfite (NADPH route): step 1/1. Functionally, component of the sulfite reductase complex that catalyzes the 6-electron reduction of sulfite to sulfide. This is one of several activities required for the biosynthesis of L-cysteine from sulfate. The polypeptide is Sulfite reductase [NADPH] hemoprotein beta-component (Shewanella piezotolerans (strain WP3 / JCM 13877)).